Consider the following 3284-residue polypeptide: Location of vulva defective 1 (3284 aa).

The signal sequence occupies residues 1-21; sequence MKKSNFFVLLLLAISAIQIDG. 5 disordered regions span residues 226–326, 350–505, 623–702, 827–926, and 1043–1216; these read ESTS…ITST, TTML…GTNP, VASS…ADST, STSE…ASTE, and TTTE…SLAT. 2 stretches are compositionally biased toward low complexity: residues 227–326 and 350–500; these read STST…ITST and TTML…TTSS. The segment covering 827–913 has biased composition (low complexity); that stretch reads STSEVTSTTS…PSDSSSASDS (87 aa). The segment covering 914-926 has biased composition (polar residues); that stretch reads MRTTTVDPDASTE. The segment covering 1043–1057 has biased composition (low complexity); that stretch reads TTTETPPTTVSSSDD. A compositionally biased stretch (gly residues) spans 1060 to 1078; that stretch reads GKTGGTGATGGTGGTGSGG. Residues 1079–1104 show a composition bias toward low complexity; that stretch reads SATTLSTGDAVRSTTSGSGSGQSSTG. Over residues 1105-1127 the composition is skewed to gly residues; sequence SGAGGSGTTASGSGSGGSSGTGS. Residues 1128–1138 show a composition bias toward polar residues; sequence DGVNSGKTTAL. Residues 1163–1192 show a composition bias toward low complexity; that stretch reads GSGSDSNGSSGVSTKSSSGSDTSGSSDSSG. Residues 1197–1216 show a composition bias toward polar residues; that stretch reads FSATAQPSTRTTKTRSSLAT. Residues 2064-2227 enclose the GAIN-B domain; the sequence is WNNSLQVEII…SVGAFNPTID (164 aa). A disulfide bond links C2181 and C2209. The GPS stretch occupies residues 2181-2227; that stretch reads CYFYQKTSDVFNSEGMYPSDGQGMQFVNCSTDHLTMFSVGAFNPTID. Residues 2245–2265 form a helical membrane-spanning segment; the sequence is VMIAAVFMLVVYGCLTINAII. The PLAT domain occupies 2288–2411; it reads YMYVIAVETG…GDGETERLAR (124 aa). The next 10 membrane-spanning stretches (helical) occupy residues 2453-2473, 2496-2516, 2557-2577, 2592-2612, 2672-2692, 2945-2965, 2994-3014, 3043-3063, 3089-3109, and 3144-3164; these read DYSVSIIFSLVVVSMISITIL, IAFGVGFGVLITFLNSLHILL, IIVFPVLMGLIYISGAGMSLM, LILWAVVFEPIKGLIWAFLIL, LFITIRDMLCFFASLYIMVML, MLYIFFSVLIFVKEIVFYLYG, WNFMDLIVGALAVASVLAYTI, WEIVFSYCLAGAVFFTSCKMI, FGIAFLFFSMTFNSVLYAVLG, and FAFVVIMLYMIAGSKLVLQLY.

The protein belongs to the polycystin family. As to quaternary structure, interacts (via PLAT domain) with atp-2 (via N-terminus) and with kin-10 (via C-terminus). Interacts (via C-terminus) with isoform a of stam-1/pqn-19 (via C-terminus). Post-translationally, autoproteolytically processed at the GPS region of the GAIN-B domain; this cleavage modulates receptor activity. In terms of tissue distribution, exclusively expressed in a subset of three categories of adult male sensory neurons: ray neurons, hook neurons and head cephalic (CEM) neurons.

It localises to the membrane. Its subcellular location is the cell projection. It is found in the cilium. In terms of biological role, required for two aspects of male mating behavior: response to hermaphrodite contact and vulva location. Acts in the same pathway as pkd-2 and atp-2 in response behavior. May be required for ciliary targeting of pkd-2. The sequence is that of Location of vulva defective 1 (lov-1) from Caenorhabditis elegans.